A 259-amino-acid chain; its full sequence is Acetylglutamate kinase (259 aa).

Substrate is bound by residues 46–47, Arg-68, and Asn-162; that span reads GG.

The protein belongs to the acetylglutamate kinase family. ArgB subfamily.

Its subcellular location is the cytoplasm. The catalysed reaction is N-acetyl-L-glutamate + ATP = N-acetyl-L-glutamyl 5-phosphate + ADP. It functions in the pathway amino-acid biosynthesis; L-arginine biosynthesis; N(2)-acetyl-L-ornithine from L-glutamate: step 2/4. Its function is as follows. Catalyzes the ATP-dependent phosphorylation of N-acetyl-L-glutamate. The chain is Acetylglutamate kinase from Roseiflexus castenholzii (strain DSM 13941 / HLO8).